The following is a 524-amino-acid chain: Light-independent protochlorophyllide reductase subunit B (524 aa).

Position 36 (aspartate 36) interacts with [4Fe-4S] cluster. Catalysis depends on aspartate 290, which acts as the Proton donor. Glycine 425–leucine 426 is a substrate binding site.

This sequence belongs to the ChlB/BchB/BchZ family. In terms of assembly, protochlorophyllide reductase is composed of three subunits; ChlL, ChlN and ChlB. Forms a heterotetramer of two ChlB and two ChlN subunits. The cofactor is [4Fe-4S] cluster.

The enzyme catalyses chlorophyllide a + oxidized 2[4Fe-4S]-[ferredoxin] + 2 ADP + 2 phosphate = protochlorophyllide a + reduced 2[4Fe-4S]-[ferredoxin] + 2 ATP + 2 H2O. It functions in the pathway porphyrin-containing compound metabolism; chlorophyll biosynthesis (light-independent). In terms of biological role, component of the dark-operative protochlorophyllide reductase (DPOR) that uses Mg-ATP and reduced ferredoxin to reduce ring D of protochlorophyllide (Pchlide) to form chlorophyllide a (Chlide). This reaction is light-independent. The NB-protein (ChlN-ChlB) is the catalytic component of the complex. The chain is Light-independent protochlorophyllide reductase subunit B from Parasynechococcus marenigrum (strain WH8102).